The chain runs to 200 residues: Large ribosomal subunit protein uL4 (200 aa).

The segment at 43 to 67 (RAQKTRAEVSGSGKKPWRQKGTGRA) is disordered.

Belongs to the universal ribosomal protein uL4 family. Part of the 50S ribosomal subunit.

One of the primary rRNA binding proteins, this protein initially binds near the 5'-end of the 23S rRNA. It is important during the early stages of 50S assembly. It makes multiple contacts with different domains of the 23S rRNA in the assembled 50S subunit and ribosome. Functionally, forms part of the polypeptide exit tunnel. The polypeptide is Large ribosomal subunit protein uL4 (Haemophilus influenzae (strain PittEE)).